Consider the following 235-residue polypeptide: Hydroxyacylglutathione hydrolase (235 aa).

His-53, His-55, Asp-57, His-58, His-109, Asp-127, and His-165 together coordinate Zn(2+).

This sequence belongs to the metallo-beta-lactamase superfamily. Glyoxalase II family. Monomer. It depends on Zn(2+) as a cofactor.

It catalyses the reaction an S-(2-hydroxyacyl)glutathione + H2O = a 2-hydroxy carboxylate + glutathione + H(+). The protein operates within secondary metabolite metabolism; methylglyoxal degradation; (R)-lactate from methylglyoxal: step 2/2. In terms of biological role, thiolesterase that catalyzes the hydrolysis of S-D-lactoyl-glutathione to form glutathione and D-lactic acid. This chain is Hydroxyacylglutathione hydrolase, found in Actinobacillus pleuropneumoniae serotype 5b (strain L20).